Here is a 203-residue protein sequence, read N- to C-terminus: Glycerol-3-phosphate acyltransferase (203 aa).

The next 4 helical transmembrane spans lie at 4–24, 68–88, 104–124, and 125–145; these read LTFA…AVLI, IPVY…FIGI, GGKG…DMGS, and FMIV…LAAI.

This sequence belongs to the PlsY family. Probably interacts with PlsX.

The protein localises to the cell inner membrane. The enzyme catalyses an acyl phosphate + sn-glycerol 3-phosphate = a 1-acyl-sn-glycero-3-phosphate + phosphate. Its pathway is lipid metabolism; phospholipid metabolism. Functionally, catalyzes the transfer of an acyl group from acyl-phosphate (acyl-PO(4)) to glycerol-3-phosphate (G3P) to form lysophosphatidic acid (LPA). This enzyme utilizes acyl-phosphate as fatty acyl donor, but not acyl-CoA or acyl-ACP. The chain is Glycerol-3-phosphate acyltransferase from Tolumonas auensis (strain DSM 9187 / NBRC 110442 / TA 4).